The chain runs to 192 residues: Ion-translocating oxidoreductase complex subunit A (192 aa).

6 consecutive transmembrane segments (helical) span residues Leu-5–Leu-25, Ile-39–Val-59, Leu-72–Val-92, Ala-102–Leu-122, Ala-134–Met-154, and Ala-171–Val-191.

Belongs to the NqrDE/RnfAE family. In terms of assembly, the complex is composed of six subunits: RnfA, RnfB, RnfC, RnfD, RnfE and RnfG.

It is found in the cell inner membrane. Part of a membrane-bound complex that couples electron transfer with translocation of ions across the membrane. In Shewanella loihica (strain ATCC BAA-1088 / PV-4), this protein is Ion-translocating oxidoreductase complex subunit A.